The sequence spans 96 residues: Nucleoid-associated protein CCA_00330 (96 aa).

The protein belongs to the YbaB/EbfC family. In terms of assembly, homodimer.

It localises to the cytoplasm. The protein localises to the nucleoid. Its function is as follows. Binds to DNA and alters its conformation. May be involved in regulation of gene expression, nucleoid organization and DNA protection. The sequence is that of Nucleoid-associated protein CCA_00330 from Chlamydia caviae (strain ATCC VR-813 / DSM 19441 / 03DC25 / GPIC) (Chlamydophila caviae).